The following is a 168-amino-acid chain: Segregation and condensation protein B (168 aa).

It belongs to the ScpB family. In terms of assembly, homodimer. Homodimerization may be required to stabilize the binding of ScpA to the Smc head domains. Component of a cohesin-like complex composed of ScpA, ScpB and the Smc homodimer, in which ScpA and ScpB bind to the head domain of Smc. The presence of the three proteins is required for the association of the complex with DNA.

It localises to the cytoplasm. Functionally, participates in chromosomal partition during cell division. May act via the formation of a condensin-like complex containing Smc and ScpA that pull DNA away from mid-cell into both cell halves. The sequence is that of Segregation and condensation protein B from Caldanaerobacter subterraneus subsp. tengcongensis (strain DSM 15242 / JCM 11007 / NBRC 100824 / MB4) (Thermoanaerobacter tengcongensis).